A 638-amino-acid chain; its full sequence is Nucleolar protein 4 (638 aa).

4 disordered regions span residues 210-312, 343-403, 503-535, and 573-603; these read QQDE…SPLS, EREA…TDGV, NAAK…TYST, and SSGP…QLSP. The span at 211–225 shows a compositional bias: acidic residues; the sequence is QDEDESSIESDEFDM. 4 stretches are compositionally biased toward polar residues: residues 229–254, 263–281, 302–312, and 351–363; these read TRMS…NLHG, ESFN…SGGT, QPLNLSDSPLS, and SKSP…SYDS. Composition is skewed to basic and acidic residues over residues 364–374, 391–403, and 503–515; these read GKNESVDRGAE, HDDS…TDGV, and NAAK…RQQD. A compositionally biased stretch (low complexity) spans 588–597; that stretch reads SSGSSSSSNS.

Expressed predominantly in fetal brain, adult brain and testis.

The protein resides in the nucleus. The protein localises to the nucleolus. This Homo sapiens (Human) protein is Nucleolar protein 4 (NOL4).